We begin with the raw amino-acid sequence, 263 residues long: uncharacterized protein (263 aa).

31–38 (GPTGSGKT) serves as a coordination point for ATP.

Belongs to the CbbQ/NirQ/NorQ/GpvN family.

This is an uncharacterized protein from Staphylococcus epidermidis (strain ATCC 35984 / DSM 28319 / BCRC 17069 / CCUG 31568 / BM 3577 / RP62A).